The following is a 263-amino-acid chain: tRNA uridine(34) hydroxylase (263 aa).

Residues 129-223 form the Rhodanese domain; it reads EGREIALLDT…YFEEVGGAHY (95 aa). The active-site Cysteine persulfide intermediate is Cys-183.

This sequence belongs to the TrhO family.

The enzyme catalyses uridine(34) in tRNA + AH2 + O2 = 5-hydroxyuridine(34) in tRNA + A + H2O. Its function is as follows. Catalyzes oxygen-dependent 5-hydroxyuridine (ho5U) modification at position 34 in tRNAs. This Variovorax paradoxus (strain S110) protein is tRNA uridine(34) hydroxylase.